Here is a 312-residue protein sequence, read N- to C-terminus: Protoheme IX farnesyltransferase 2 (312 aa).

8 helical membrane passes run 31 to 51 (VMSL…GHIH), 52 to 72 (PVLG…SGAL), 119 to 139 (ALVN…YVVI), 152 to 172 (IVIG…AATG), 179 to 199 (LLLF…LALF), 225 to 245 (ILLY…LGYF), 247 to 267 (WVYG…AIEV), and 283 to 303 (LFAF…LDVV).

This sequence belongs to the UbiA prenyltransferase family. Protoheme IX farnesyltransferase subfamily.

Its subcellular location is the cell inner membrane. It carries out the reaction heme b + (2E,6E)-farnesyl diphosphate + H2O = Fe(II)-heme o + diphosphate. The protein operates within porphyrin-containing compound metabolism; heme O biosynthesis; heme O from protoheme: step 1/1. Functionally, converts heme B (protoheme IX) to heme O by substitution of the vinyl group on carbon 2 of heme B porphyrin ring with a hydroxyethyl farnesyl side group. This chain is Protoheme IX farnesyltransferase 2, found in Nitrobacter winogradskyi (strain ATCC 25391 / DSM 10237 / CIP 104748 / NCIMB 11846 / Nb-255).